The primary structure comprises 75 residues: Holin (75 aa).

Transmembrane regions (helical) follow at residues 16-36 (FAQA…GVDW) and 39-59 (ALSI…ASGI).

As to quaternary structure, homomultimer.

Its subcellular location is the host cell inner membrane. In terms of biological role, accumulates harmlessly in the cytoplasmic membrane until it reaches a critical concentration that triggers the formation of micron-scale pores (holes) causing host cell membrane disruption and endolysin escape into the periplasmic space. Determines the precise timing of host cell lysis. Participates with the endolysin protein in the sequential events which lead to the programmed host cell lysis releasing the mature viral particles from the host cell. In Lactococcus lactis subsp. cremoris (Streptococcus cremoris), this protein is Holin.